Consider the following 298-residue polypeptide: Probable porphobilinogen deaminase (298 aa).

Cys-241 carries the post-translational modification S-(dipyrrolylmethanemethyl)cysteine.

Belongs to the HMBS family. Dipyrromethane is required as a cofactor.

The enzyme catalyses 4 porphobilinogen + H2O = hydroxymethylbilane + 4 NH4(+). The protein operates within porphyrin-containing compound metabolism; protoporphyrin-IX biosynthesis; coproporphyrinogen-III from 5-aminolevulinate: step 2/4. Tetrapolymerization of the monopyrrole PBG into the hydroxymethylbilane pre-uroporphyrinogen in several discrete steps. This Methanopyrus kandleri (strain AV19 / DSM 6324 / JCM 9639 / NBRC 100938) protein is Probable porphobilinogen deaminase.